The chain runs to 487 residues: Multiple inositol polyphosphate phosphatase 1 (487 aa).

An N-terminal signal peptide occupies residues Met1–Cys30. His89 is an active-site residue. N-linked (GlcNAc...) asparagine glycosylation is found at Asn242 and Asn481. The Prevents secretion from ER signature appears at Ser484–Leu487.

It belongs to the histidine acid phosphatase family. MINPP1 subfamily. Post-translationally, N-glycosylated. Widely expressed with highest levels in kidney, liver, cerebellum and placenta.

The protein localises to the endoplasmic reticulum lumen. Its subcellular location is the secreted. The protein resides in the cell membrane. It catalyses the reaction 1D-myo-inositol hexakisphosphate + H2O = 1D-myo-inositol 1,2,4,5,6-pentakisphosphate + phosphate. It carries out the reaction 1D-myo-inositol 1,2,4,5,6-pentakisphosphate + H2O = 1D-myo-inositol 1,2,5,6-tetrakisphosphate + phosphate. The enzyme catalyses 1D-myo-inositol 1,2,5,6-tetrakisphosphate + H2O = 1D-myo-inositol 1,2,6-trisphosphate + phosphate. The catalysed reaction is 1D-myo-inositol 1,2,6-trisphosphate + H2O = 1D-myo-inositol 1,2-bisphosphate + phosphate. It catalyses the reaction 1D-myo-inositol 1,2-bisphosphate + H2O = 1D-myo-inositol 2-phosphate + phosphate. It carries out the reaction 1D-myo-inositol hexakisphosphate + H2O = 1D-myo-inositol 1,2,3,5,6-pentakisphosphate + phosphate. The enzyme catalyses 1D-myo-inositol 1,2,3,5,6-pentakisphosphate + H2O = 1D-myo-inositol 1,2,3,6-tetrakisphosphate + phosphate. The catalysed reaction is 1D-myo-inositol 1,2,3,6-tetrakisphosphate + H2O = 1D-myo-inositol 1,2,3-trisphosphate + phosphate. It catalyses the reaction 1D-myo-inositol 1,2,3-trisphosphate + H2O = 1D-myo-inositol 2,3-bisphosphate + phosphate. It carries out the reaction 1D-myo-inositol 2,3-bisphosphate + H2O = 1D-myo-inositol 2-phosphate + phosphate. The enzyme catalyses 1D-myo-inositol 1,3,4,5,6-pentakisphosphate + H2O = 1D-myo-inositol 1,4,5,6-tetrakisphosphate + phosphate. The catalysed reaction is 1D-myo-inositol 1,4,5,6-tetrakisphosphate + H2O = 1D-myo-inositol 1,4,5-trisphosphate + phosphate. It catalyses the reaction (2R)-2,3-bisphosphoglycerate + H2O = (2R)-2-phosphoglycerate + phosphate. Its function is as follows. Multiple inositol polyphosphate phosphatase that hydrolyzes 1D-myo-inositol 1,3,4,5,6-pentakisphosphate (InsP5[2OH]) and 1D-myo-inositol hexakisphosphate (InsP6) to a range of less phosphorylated inositol phosphates. This regulates the availability of these various small molecule second messengers and metal chelators which control many aspects of cell physiology. Has a weak in vitro activity towards 1D-myo-inositol 1,4,5-trisphosphate which is unlikely to be physiologically relevant. By regulating intracellular inositol polyphosphates pools, which act as metal chelators, it may control the availability of intracellular calcium and iron, which are important for proper neuronal development and homeostasis. May have a dual substrate specificity, and function as a 2,3-bisphosphoglycerate 3-phosphatase hydrolyzing 2,3-bisphosphoglycerate to 2-phosphoglycerate. 2,3-bisphosphoglycerate (BPG) is formed as part of the Rapoport-Luebering glycolytic bypass and is a regulator of systemic oxygen homeostasis as the major allosteric effector of hemoglobin. This chain is Multiple inositol polyphosphate phosphatase 1, found in Homo sapiens (Human).